A 2382-amino-acid chain; its full sequence is Serine/threonine-protein kinase WNK1 (2382 aa).

2 disordered regions span residues 1 to 81 (MSGG…RFFR) and 95 to 203 (LPGL…QQDD). Serine 15 and serine 19 each carry phosphoserine. Over residues 50 to 66 (RTEEYRRRRHTMDKDSR) the composition is skewed to basic and acidic residues. Threonine 60 is modified (phosphothreonine). 2 stretches are compositionally biased toward low complexity: residues 95-108 (LPGL…PSIP) and 125-153 (VTAT…GPAP). Serine 167 and serine 174 each carry phosphoserine. In terms of domain architecture, Protein kinase spans 221 to 479 (LKFDIEIGRG…IKDLLNHAFF (259 aa)). Serine 231 provides a ligand contact to ATP. Chloride is bound by residues phenylalanine 283 and leucine 299. Residues 301–304 (TELM) and lysine 351 contribute to the ATP site. Aspartate 368 functions as the Proton acceptor in the catalytic mechanism. Chloride is bound by residues leucine 369 and leucine 371. 2 positions are modified to phosphoserine; by autocatalysis: serine 378 and serine 382. The tract at residues 488–555 (ELAEEDDGEK…VCEGDHKTMA (68 aa)) is autoinhibitory domain. Positions 573–588 (QLVREEQEKKKQEESS) are enriched in basic and acidic residues. Disordered regions lie at residues 573-779 (QLVR…QPQA), 1018-1041 (QPGG…STQG), and 1053-1119 (VAQT…SRPK). Residues 598–614 (ASQTGIKQLPSASTGIP) show a composition bias toward polar residues. A compositionally biased stretch (low complexity) spans 615–625 (TASTTSASVST). The segment at 628 to 638 (EPEEPEADQHQ) is interaction with KLHL3. Polar residues predominate over residues 637-689 (HQQLQYQQPSISVLSDGTVDSGQGSSVFTESRVSSQQTVSYGSQHEQAHSTGT). Low complexity predominate over residues 709–779 (PPSSVAQGQS…TAQPVSQPQA (71 aa)). Positions 1025-1041 (QAPTTSSQQAVLESTQG) are enriched in polar residues. Positions 1053-1077 (VAQTQATQPTTLASSVDSAHSDVAS) are enriched in low complexity. The span at 1080-1090 (SDGNENVPSSS) shows a compositional bias: polar residues. The segment covering 1098–1119 (TKRHYRKSVRSRSRHEKTSRPK) has biased composition (basic residues). An RFXV motif 1 motif is present at residues 1257 to 1260 (RFIV). Serine 1261 is subject to Phosphoserine. Composition is skewed to low complexity over residues 1457-1467 (SASAGGSTATP) and 1733-1745 (QVST…TSGV). Disordered regions lie at residues 1457–1476 (SASA…AVVS) and 1733–1790 (QVST…TQSQ). Residue threonine 1848 is modified to Phosphothreonine. Positions 1859–1862 (RFQV) match the RFXV motif 2 motif. Residues 1866-1948 (ADGAQKEGKN…QPTKVGRFQV (83 aa)) are disordered. Residues 1869-1884 (AQKEGKNKSEDAKSVH) show a composition bias toward basic and acidic residues. Positions 1887–1905 (SSTSESSVLSSSSPESTLV) are enriched in low complexity. Polar residues predominate over residues 1927–1940 (KTTASEAKSDTGQP). 2 consecutive short sequence motifs (RFXV motif) follow at residues 1945–1948 (RFQV) and 1957–1960 (RFSV). Residues serine 1978, serine 2002, serine 2011, serine 2012, serine 2027, serine 2029, and serine 2032 each carry the phosphoserine modification. Positions 1994–2003 (PKKEKPELSE) are enriched in basic and acidic residues. Disordered regions lie at residues 1994–2069 (PKKE…DIED) and 2101–2196 (LYTK…NLYS). Positions 2035-2062 (QLSSKSLPSQNLSQSLSNSFNSSYMSSD) are enriched in low complexity. The residue at position 2121 (serine 2121) is a Phosphoserine. The span at 2122 to 2134 (GRRRRPTKSKGSK) shows a compositional bias: basic residues. The segment covering 2135-2145 (SSRSSSLGNKS) has biased composition (low complexity). Polar residues-rich tracts occupy residues 2146-2167 (PQLS…QQTL) and 2175-2196 (ESGQ…NLYS). The interval 2241–2261 (SRKGTFTDDLHKLVDNWARDA) is amphipathic alpha-helix. A phosphoserine mark is found at serine 2270 and serine 2286. The tract at residues 2332–2352 (PFGAQWSGTGGPAPQPLGQFQ) is disordered. 2 positions are modified to phosphoserine: serine 2370 and serine 2372.

This sequence belongs to the protein kinase superfamily. Ser/Thr protein kinase family. WNK subfamily. As to quaternary structure, interacts with WNK3. Interacts with WNK4; inhibiting the activity of WNK4. Interacts with SGK1; promoting its activation. Associates with the mTORC2 complex. Interacts with UVRAG. Interacts (via amphipathic alpha-helix region) with EMC2; promoting the ER membrane protein complex assembly. Interacts with isoform 1; inhibiting isoform 1 activity. The cofactor is Mg(2+). Autophosphorylated at Ser-378 and Ser-382, promoting its activity. Autophosphorylation at Ser-382 is inhibited by intracellular calcium. Phosphorylation at Thr-60 increases ability to activate SGK1. Post-translationally, ubiquitinated by the BCR(KLHL3) complex, leading to its degradation. Also ubiquitinated by the BCR(KLHL2) complex. In terms of processing, may be O-glycosylated. Widely expressed, with highest levels observed in the testis, heart, kidney and skeletal muscle. In terms of tissue distribution, strong expression in dorsal root ganglia and spinal cord. As to expression, this isoform is kidney-specific and specifically expressed in the distal convoluted tubule (DCT) and connecting tubule (CNT) of the nephron.

Its subcellular location is the cytoplasm. It is found in the nucleus. The protein localises to the cytoskeleton. It localises to the spindle. It catalyses the reaction L-seryl-[protein] + ATP = O-phospho-L-seryl-[protein] + ADP + H(+). The catalysed reaction is L-threonyl-[protein] + ATP = O-phospho-L-threonyl-[protein] + ADP + H(+). Activated in response to hyperosmotic stress: cell shrinkage promotes formation of a membraneless compartment that concentrates WNK1 with its substrates, OXSR1/OSR1 and STK39/SPAK. Activation requires autophosphorylation of Ser-382 and, to a lower extent, Ser-378. Autophosphorylation and subsequent activation is inhibited by increases in intracellular ionic strength: Cl(-) potently inhibits WNK1 kinase activity via direct binding. Also inhibited by K(+) ions. Inhibited by small compounds staurosporine, tyrphostin 47, as well as Src tyrosine kinase inhibitors PP1 and PP2. In terms of biological role, serine/threonine-protein kinase component of the WNK1-SPAK/OSR1 kinase cascade, which acts as a key regulator of blood pressure and regulatory volume increase by promoting ion influx. WNK1 mediates regulatory volume increase in response to hyperosmotic stress by acting as a molecular crowding sensor, which senses cell shrinkage and mediates formation of a membraneless compartment by undergoing liquid-liquid phase separation. The membraneless compartment concentrates WNK1 with its substrates, OXSR1/OSR1 and STK39/SPAK, promoting WNK1-dependent phosphorylation and activation of downstream kinases OXSR1/OSR1 and STK39/SPAK. Following activation, OXSR1/OSR1 and STK39/SPAK catalyze phosphorylation of ion cotransporters SLC12A1/NKCC2, SLC12A2/NKCC1, SLC12A5/KCC2 and SLC12A6/KCC3, regulating their activity. Phosphorylation of Na-K-Cl cotransporters SLC12A2/NKCC1 and SLC12A2/NKCC1 promote their activation and ion influx; simultaneously, phosphorylation of K-Cl cotransporters SLC12A5/KCC2 and SLC12A6/KCC3 inhibit their activity, blocking ion efflux. Also acts as a regulator of angiogenesis in endothelial cells via activation of OXSR1/OSR1 and STK39/SPAK: activation of OXSR1/OSR1 regulates chemotaxis and invasion, while STK39/SPAK regulates endothelial cell proliferation. Also acts independently of the WNK1-SPAK/OSR1 kinase cascade by catalyzing phosphorylation of other substrates, such as SYT2, PCF11 and NEDD4L. Mediates phosphorylation of SYT2, regulating SYT2 association with phospholipids and membrane-binding. Regulates mRNA export in the nucleus by mediating phosphorylation of PCF11, thereby decreasing the association between PCF11 and POLR2A/RNA polymerase II and promoting mRNA export to the cytoplasm. Acts as a negative regulator of autophagy. Required for the abscission step during mitosis, independently of the WNK1-SPAK/OSR1 kinase cascade. May also play a role in actin cytoskeletal reorganization. Also acts as a scaffold protein independently of its protein kinase activity: negatively regulates cell membrane localization of various transporters and channels, such as SLC4A4, SLC26A6, SLC26A9, TRPV4 and CFTR. Involved in the regulation of epithelial Na(+) channel (ENaC) by promoting activation of SGK1 in a kinase-independent manner: probably acts as a scaffold protein that promotes the recruitment of SGK1 to the mTORC2 complex in response to chloride, leading to mTORC2-dependent phosphorylation and activation of SGK1. Acts as an assembly factor for the ER membrane protein complex independently of its protein kinase activity: associates with EMC2 in the cytoplasm via its amphipathic alpha-helix, and prevents EMC2 ubiquitination and subsequent degradation, thereby promoting EMC2 stabilization. Kinase-defective isoform specifically expressed in kidney, which acts as a dominant-negative regulator of the longer isoform 1. Does not directly inhibit WNK4 and has no direct effect on sodium and chloride ion transport. Down-regulates sodium-chloride cotransporter activity indirectly by inhibiting isoform 1, it associates with isoform 1 and attenuates its kinase activity. In kidney, may play an important role regulating sodium and potassium balance. The polypeptide is Serine/threonine-protein kinase WNK1 (Homo sapiens (Human)).